The primary structure comprises 360 residues: Photosystem II protein D1 3 (360 aa).

The next 3 helical transmembrane spans lie at 29-46 (YVGW…TAAI), 118-133 (HFLI…QWEL), and 142-156 (WIPV…AATA). Chlorophyll a is bound at residue His-118. Tyr-126 is a pheophytin a binding site. [CaMn4O5] cluster-binding residues include Asp-170 and Glu-189. The chain crosses the membrane as a helical span at residues 197 to 218 (FHMIGVAGVFGGALFSAMHGSL). His-198 contributes to the chlorophyll a binding site. A quinone is bound by residues His-215 and 264–265 (SF). His-215 serves as a coordination point for Fe cation. His-272 provides a ligand contact to Fe cation. Residues 274 to 288 (FLAAWPVIGIWFAAL) traverse the membrane as a helical segment. Positions 332, 333, 342, and 344 each coordinate [CaMn4O5] cluster. A propeptide spanning residues 345-360 (SGEVQPIALTAPAIAS) is cleaved from the precursor.

Belongs to the reaction center PufL/M/PsbA/D family. In terms of assembly, PSII is composed of 1 copy each of membrane proteins PsbA, PsbB, PsbC, PsbD, PsbE, PsbF, PsbH, PsbI, PsbJ, PsbK, PsbL, PsbM, PsbT, PsbX, PsbY, PsbZ, Psb30/Ycf12, peripheral proteins PsbO, CyanoQ (PsbQ), PsbU, PsbV and a large number of cofactors. It forms dimeric complexes. Requires The D1/D2 heterodimer binds P680, chlorophylls that are the primary electron donor of PSII, and subsequent electron acceptors. It shares a non-heme iron and each subunit binds pheophytin, quinone, additional chlorophylls, carotenoids and lipids. D1 provides most of the ligands for the Mn4-Ca-O5 cluster of the oxygen-evolving complex (OEC). There is also a Cl(-1) ion associated with D1 and D2, which is required for oxygen evolution. The PSII complex binds additional chlorophylls, carotenoids and specific lipids. as cofactor. Post-translationally, tyr-161 forms a radical intermediate that is referred to as redox-active TyrZ, YZ or Y-Z. In terms of processing, C-terminally processed by CtpA; processing is essential to allow assembly of the oxygen-evolving complex and thus photosynthetic growth.

It localises to the cellular thylakoid membrane. The catalysed reaction is 2 a plastoquinone + 4 hnu + 2 H2O = 2 a plastoquinol + O2. Photosystem II (PSII) is a light-driven water:plastoquinone oxidoreductase that uses light energy to abstract electrons from H(2)O, generating O(2) and a proton gradient subsequently used for ATP formation. It consists of a core antenna complex that captures photons, and an electron transfer chain that converts photonic excitation into a charge separation. The D1/D2 (PsbA/PsbD) reaction center heterodimer binds P680, the primary electron donor of PSII as well as several subsequent electron acceptors. This chain is Photosystem II protein D1 3, found in Nostoc sp. (strain PCC 7120 / SAG 25.82 / UTEX 2576).